The sequence spans 90 residues: Cell division topological specificity factor (90 aa).

The protein belongs to the MinE family.

Prevents the cell division inhibition by proteins MinC and MinD at internal division sites while permitting inhibition at polar sites. This ensures cell division at the proper site by restricting the formation of a division septum at the midpoint of the long axis of the cell. This chain is Cell division topological specificity factor, found in Lachnoclostridium phytofermentans (strain ATCC 700394 / DSM 18823 / ISDg) (Clostridium phytofermentans).